A 578-amino-acid chain; its full sequence is MDPDKQDALNSIENSIYRTAFKLQSVQTLCQLDLIDSSLIQQVLLRPSFWEARKHSLSVQQLSQALQELFQKAREENPGQVHPRAPELTLSLLTTMYNSKGTGFLQLMPAAAALITLSGDSPLSKYRALFQLYAENSRGGYDSGPRMTRRVLRKLLTDLQQIPTFVGESRALCPVESATRSCFQGVLSPAIKEEKFLSWVQSEPPILLWLPTCHRLSAAERVTHPARCTLCRTFPITGLRYRCLKCLNFDICQMCFLSGLHSKSHQKSHPVIEHCIQMSAMQNTKLLFRTLRNNLLQGRCRKKEAARRQQLLDQVNPKGVPHHAQARLLKKQLNQYKDKLQAIYTSQEERICRFETRIHKLKTNQDSLWTKLQQIRRDLQARLQPPGPSSSSFQNVGNKVDHSSTEKVPKGGDYLQIKNATEDASTGEPLPKLDEVDRSHRSHTNAEHALRNPESPETTLHSTRAQSQTQKMPQKVISALPSYQEGLKQDIPKMVPAEMSSPALAAVEKKEAGNIKERKDELEEEELQELLSKLMDAFNLETPSGPESSVNMDLYSGAQRVCRAFSALVDQIALPNLK.

The ZZ-type zinc-finger motif lies at 223–279 (THPARCTLCRTFPITGLRYRCLKCLNFDICQMCFLSGLHSKSHQKSHPVIEHCIQMS). 8 residues coordinate Zn(2+): cysteine 228, cysteine 231, cysteine 243, cysteine 246, cysteine 252, cysteine 255, histidine 265, and histidine 269. The stretch at 322–351 (HHAQARLLKKQLNQYKDKLQAIYTSQEERI) forms a coiled coil. The segment at 382–475 (RLQPPGPSSS…QSQTQKMPQK (94 aa)) is disordered. 2 stretches are compositionally biased toward basic and acidic residues: residues 399–410 (KVDHSSTEKVPK) and 431–451 (PKLDEVDRSHRSHTNAEHALR). Positions 455–472 (SPETTLHSTRAQSQTQKM) are enriched in polar residues. Residues 503–537 (ALAAVEKKEAGNIKERKDELEEEELQELLSKLMDA) adopt a coiled-coil conformation.

Its subcellular location is the cell membrane. The sequence is that of Dystrotelin (DYTN) from Homo sapiens (Human).